The chain runs to 90 residues: MDVVRTLILCVCLFGLTFAVPCIDGVCTSNELQCASGYVKGCHAGLCTCEHATTQSCTVVNNCLHLGTCSLHGRDGFWHCVDSVCKCFFF.

A signal peptide spans 1–19 (MDVVRTLILCVCLFGLTFA).

Post-translationally, contains 6 disulfide bonds. As to expression, detected in hemolymph (at protein level). In oysters collected in the summer the expression level is highest in the digestive gland with low levels of expression in gill, mantle, labial palp, style-sac midgut, gonad, heart, and hemocyte. In winter expression levels are higher in all tissues with highest expression levels observed in the digestive gland. Within the digestive gland expression is limited to the basophil cells of the digestive diverticula.

The protein resides in the secreted. In terms of biological role, slow-binding inhibitor of serine proteases. The inhibitor rapidly binds to the protease forming a weak enzyme-inhibitor complex, and this is followed by a slow isomerization forming a tight-binding enzyme-inhibitor complex. Active against subtilisin A, perkinsin and trypsin with dissociation constants of 0.29 nM, 13.7 nM and 17.7 nM respectively. Not active against thermolysin, papain or pepsin. Has antiparasitic activity against the protozoan P.marinus. In Crassostrea virginica (Eastern oyster), this protein is Serine protease inhibitor Cvsi-1.